The sequence spans 111 residues: Cryptic phage CTXphi transcriptional repressor RstR (111 aa).

The HTH cro/C1-type domain maps to 6–60 (IRDLRVERDLNQEEVANGIGVGKNTYLAYEKGTQSPKLETVEKLAKFYGVPIAEL). Residues 17–36 (QEEVANGIGVGKNTYLAYEK) constitute a DNA-binding region (H-T-H motif).

In terms of biological role, transcriptional repressor of the integrated CTXPhi phage gene rstA2. The chain is Cryptic phage CTXphi transcriptional repressor RstR (rstR) from Vibrio cholerae.